The sequence spans 387 residues: 3-ketoacyl-CoA thiolase (387 aa).

The active-site Acyl-thioester intermediate is cysteine 91. Residues histidine 343 and cysteine 373 each act as proton acceptor in the active site.

Belongs to the thiolase-like superfamily. Thiolase family. Heterotetramer of two alpha chains (FadB) and two beta chains (FadA).

Its subcellular location is the cytoplasm. The catalysed reaction is an acyl-CoA + acetyl-CoA = a 3-oxoacyl-CoA + CoA. It functions in the pathway lipid metabolism; fatty acid beta-oxidation. Functionally, catalyzes the final step of fatty acid oxidation in which acetyl-CoA is released and the CoA ester of a fatty acid two carbons shorter is formed. The chain is 3-ketoacyl-CoA thiolase from Idiomarina loihiensis (strain ATCC BAA-735 / DSM 15497 / L2-TR).